A 338-amino-acid polypeptide reads, in one-letter code: MSAKLTDLQLLHELEPVVEKYLNRHLSMHKPWNPHDYIPWSDGKNYYALGGQDWDPDQSKLSDVAQVAMVQNLVTEDNLPSYHREIAMNMGMDGAWGQWVNRWTAEENRHGIALRDYLVVTRSVDPVELEKLRLEVVNRGFSPGQNHQGHYFAESLTDSVLYVSFQELATRISHRNTGKACNDPVADQLMAKISADENLHMIFYRDVSEAAFDLVPNQAMKSLHLILSHFQMPGFQVPEFRRKAVVIAVGGVYDPRIHLDEVVMPVLKKWRIFEREDFTGEGAKLRDELALVIKDLELACDKFEVSKQRQLDREARTGKKVSAHELHKTAGKLAMSRR.

Fe cation contacts are provided by glutamate 76, glutamate 107, histidine 110, glutamate 167, glutamate 197, and histidine 200. Over residues 314 to 328 (EARTGKKVSAHELHK) the composition is skewed to basic and acidic residues. Residues 314 to 338 (EARTGKKVSAHELHKTAGKLAMSRR) are disordered.

The protein belongs to the fatty acid desaturase type 2 family. In terms of assembly, homodimer. It depends on Fe(2+) as a cofactor.

It is found in the cell surface. Its pathway is lipid metabolism; fatty acid metabolism. Functionally, may be a desaturase involved in mycobacterial fatty acid biosynthesis. The sequence is that of Putative acyl-[acyl-carrier-protein] desaturase DesA1 (desA1) from Mycobacterium tuberculosis (strain CDC 1551 / Oshkosh).